A 594-amino-acid chain; its full sequence is UvrABC system protein C (594 aa).

The 78-residue stretch at 17 to 94 (LEPGCYLMKD…IKQYQPRYNI (78 aa)) folds into the GIY-YIG domain. In terms of domain architecture, UVR spans 199-234 (KTILNHLEERMNKASEQLDFEQAKEYRDMIQHIHNL).

The protein belongs to the UvrC family. As to quaternary structure, interacts with UvrB in an incision complex.

It localises to the cytoplasm. Functionally, the UvrABC repair system catalyzes the recognition and processing of DNA lesions. UvrC both incises the 5' and 3' sides of the lesion. The N-terminal half is responsible for the 3' incision and the C-terminal half is responsible for the 5' incision. This is UvrABC system protein C from Staphylococcus epidermidis (strain ATCC 35984 / DSM 28319 / BCRC 17069 / CCUG 31568 / BM 3577 / RP62A).